The sequence spans 534 residues: CTP synthase (534 aa).

Residues 1–265 (MKYIIVTGGV…SNYLLKKLIL (265 aa)) form an amidoligase domain region. Serine 12 contributes to the CTP binding site. Position 12 (serine 12) interacts with UTP. Residue 13–18 (GLGKGI) coordinates ATP. Residue tyrosine 53 participates in L-glutamine binding. Position 70 (aspartate 70) interacts with ATP. Positions 70 and 140 each coordinate Mg(2+). CTP contacts are provided by residues 147–149 (DIE), 186–191 (KTKPTQ), and lysine 222. UTP contacts are provided by residues 186 to 191 (KTKPTQ) and lysine 222. A Glutamine amidotransferase type-1 domain is found at 289–530 (NVAIVGKYTH…MGAMLKKSKE (242 aa)). L-glutamine is bound at residue glycine 352. The active-site Nucleophile; for glutamine hydrolysis is the cysteine 379. Residues 380 to 383 (LGMQ), glutamate 403, and arginine 460 each bind L-glutamine. Catalysis depends on residues histidine 503 and glutamate 505.

The protein belongs to the CTP synthase family. In terms of assembly, homotetramer.

It catalyses the reaction UTP + L-glutamine + ATP + H2O = CTP + L-glutamate + ADP + phosphate + 2 H(+). The enzyme catalyses L-glutamine + H2O = L-glutamate + NH4(+). The catalysed reaction is UTP + NH4(+) + ATP = CTP + ADP + phosphate + 2 H(+). It functions in the pathway pyrimidine metabolism; CTP biosynthesis via de novo pathway; CTP from UDP: step 2/2. Its activity is regulated as follows. Allosterically activated by GTP, when glutamine is the substrate; GTP has no effect on the reaction when ammonia is the substrate. The allosteric effector GTP functions by stabilizing the protein conformation that binds the tetrahedral intermediate(s) formed during glutamine hydrolysis. Inhibited by the product CTP, via allosteric rather than competitive inhibition. Functionally, catalyzes the ATP-dependent amination of UTP to CTP with either L-glutamine or ammonia as the source of nitrogen. Regulates intracellular CTP levels through interactions with the four ribonucleotide triphosphates. In Methanococcoides burtonii (strain DSM 6242 / NBRC 107633 / OCM 468 / ACE-M), this protein is CTP synthase.